The following is a 55-amino-acid chain: Large ribosomal subunit protein bL33 (55 aa).

The protein belongs to the bacterial ribosomal protein bL33 family.

In Rhodospirillum centenum (strain ATCC 51521 / SW), this protein is Large ribosomal subunit protein bL33.